A 473-amino-acid chain; its full sequence is Adenosylhomocysteinase (473 aa).

Positions 64, 139, and 199 each coordinate substrate. 200-202 (TTT) contacts NAD(+). 2 residues coordinate substrate: K229 and D233. NAD(+)-binding positions include N234, 263-268 (GYGDVG), E286, N321, 342-344 (IGH), and N387.

It belongs to the adenosylhomocysteinase family. It depends on NAD(+) as a cofactor.

The protein resides in the cytoplasm. It catalyses the reaction S-adenosyl-L-homocysteine + H2O = L-homocysteine + adenosine. It functions in the pathway amino-acid biosynthesis; L-homocysteine biosynthesis; L-homocysteine from S-adenosyl-L-homocysteine: step 1/1. May play a key role in the regulation of the intracellular concentration of adenosylhomocysteine. This Paraburkholderia xenovorans (strain LB400) protein is Adenosylhomocysteinase.